The following is a 404-amino-acid chain: Metacaspase-1A (404 aa).

Residues 1 to 10 (MNPHHSHHHS) are compositionally biased toward basic residues. A disordered region spans residues 1–100 (MNPHHSHHHS…PSDPVSFGQG (100 aa)). Over residues 24–51 (QQQPPSNPYQYNQPSPQPYQGSQPPQNG) the composition is skewed to low complexity. Residues His200 and Cys256 contribute to the active site.

The protein belongs to the peptidase C14B family.

Its function is as follows. Involved in cell death (apoptosis). This is Metacaspase-1A (casA) from Aspergillus niger (strain ATCC MYA-4892 / CBS 513.88 / FGSC A1513).